A 475-amino-acid chain; its full sequence is ATP synthase subunit beta, chloroplastic (475 aa).

155-162 (GGAGVGKT) provides a ligand contact to ATP.

This sequence belongs to the ATPase alpha/beta chains family. In terms of assembly, F-type ATPases have 2 components, CF(1) - the catalytic core - and CF(0) - the membrane proton channel. CF(1) has five subunits: alpha(3), beta(3), gamma(1), delta(1), epsilon(1). CF(0) has four main subunits: a(1), b(1), b'(1) and c(9-12).

It localises to the plastid. It is found in the chloroplast thylakoid membrane. It carries out the reaction ATP + H2O + 4 H(+)(in) = ADP + phosphate + 5 H(+)(out). Produces ATP from ADP in the presence of a proton gradient across the membrane. The catalytic sites are hosted primarily by the beta subunits. The sequence is that of ATP synthase subunit beta, chloroplastic from Guillardia theta (Cryptophyte).